We begin with the raw amino-acid sequence, 674 residues long: Probable protein phosphatase 2C 66 (674 aa).

A Phosphoserine modification is found at Ser125. 2 disordered regions span residues 153 to 175 and 202 to 247; these read YSGP…RKKP and KSVI…KQSM. Residues 244 to 665 form the PPM-type phosphatase domain; sequence KQSMNSVLDV…DDVSVIVISL (422 aa). 2 residues coordinate Mn(2+): Asp282 and Gly283. Over residues 373–384 the composition is skewed to basic and acidic residues; that stretch reads NNKTKSDNRCDQ. The interval 373–392 is disordered; sequence NNKTKSDNRCDQKGSNSTTT. Positions 593 and 656 each coordinate Mn(2+).

It belongs to the PP2C family. It depends on Mg(2+) as a cofactor. The cofactor is Mn(2+). As to expression, expressed at low level in seedlings, roots, leaves, stems, young inflorescences, flowers and siliques.

It localises to the nucleus. It carries out the reaction O-phospho-L-seryl-[protein] + H2O = L-seryl-[protein] + phosphate. The catalysed reaction is O-phospho-L-threonyl-[protein] + H2O = L-threonyl-[protein] + phosphate. This Arabidopsis thaliana (Mouse-ear cress) protein is Probable protein phosphatase 2C 66 (PLL2).